The chain runs to 428 residues: Stromal membrane-associated protein 2 (428 aa).

The Arf-GAP domain maps to 13–139 (QAVLANLLLE…INVLRKEKDD (127 aa)). The segment at 28-51 (CADCQSKGPRWASWNIGVFICIRC) adopts a C4-type zinc-finger fold. Phosphoserine occurs at positions 127, 219, 224, 230, and 239. Residues 163-231 (MPQKKEDAQL…SVSRKAVGSM (69 aa)) form an interaction with clathrin heavy chains region. The disordered stretch occupies residues 218–262 (PSPSSVSRKAVGSMPTAGSAGSVPENLNLFPEPGSKSEETGKKQL). Basic and acidic residues predominate over residues 252-262 (SKSEETGKKQL). Residues 339–428 (MGGMQASMMG…NQTLSPQMWK (90 aa)) form an interaction with PICALM region.

In terms of assembly, interacts with ARF1. Interacts with PICALM and clathrin heavy chains.

The protein resides in the cytoplasm. GTPase activating protein that acts on ARF1. Can also activate ARF6 (in vitro). May play a role in clathrin-dependent retrograde transport from early endosomes to the trans-Golgi network. The sequence is that of Stromal membrane-associated protein 2 (Smap2) from Mus musculus (Mouse).